Here is a 276-residue protein sequence, read N- to C-terminus: Large ribosomal subunit protein uL2 (276 aa).

A disordered region spans residues 224–276 (VAMNPVDHPHGGGEGKTGEGRVPVSPWGTPTKGYRTRRNKRTTSMIVQRRQKR). The span at 230–242 (DHPHGGGEGKTGE) shows a compositional bias: basic and acidic residues.

Belongs to the universal ribosomal protein uL2 family. In terms of assembly, part of the 50S ribosomal subunit. Forms a bridge to the 30S subunit in the 70S ribosome.

Functionally, one of the primary rRNA binding proteins. Required for association of the 30S and 50S subunits to form the 70S ribosome, for tRNA binding and peptide bond formation. It has been suggested to have peptidyltransferase activity; this is somewhat controversial. Makes several contacts with the 16S rRNA in the 70S ribosome. In Polynucleobacter asymbioticus (strain DSM 18221 / CIP 109841 / QLW-P1DMWA-1) (Polynucleobacter necessarius subsp. asymbioticus), this protein is Large ribosomal subunit protein uL2.